A 334-amino-acid polypeptide reads, in one-letter code: E3 ubiquitin-protein ligase ATL4 (334 aa).

Positions Met-1 to Ser-20 are disordered. The chain crosses the membrane as a helical span at residues Val-28–Leu-48. Residues Cys-117–Arg-159 form an RING-type; atypical zinc finger.

This sequence belongs to the RING-type zinc finger family. ATL subfamily.

The protein localises to the membrane. The catalysed reaction is S-ubiquitinyl-[E2 ubiquitin-conjugating enzyme]-L-cysteine + [acceptor protein]-L-lysine = [E2 ubiquitin-conjugating enzyme]-L-cysteine + N(6)-ubiquitinyl-[acceptor protein]-L-lysine.. The protein operates within protein modification; protein ubiquitination. Functionally, E3 ubiquitin-protein ligase able to catalyze polyubiquitination with ubiquitin-conjugating enzyme E2 UBC8 in vitro. This is E3 ubiquitin-protein ligase ATL4 from Arabidopsis thaliana (Mouse-ear cress).